We begin with the raw amino-acid sequence, 362 residues long: Phosphoserine aminotransferase (362 aa).

L-glutamate is bound by residues serine 9 and arginine 42. Residues 76 to 77 (GR), tryptophan 102, threonine 153, aspartate 174, and glutamine 197 each bind pyridoxal 5'-phosphate. Lysine 198 carries the post-translational modification N6-(pyridoxal phosphate)lysine. 239-240 (NT) lines the pyridoxal 5'-phosphate pocket.

This sequence belongs to the class-V pyridoxal-phosphate-dependent aminotransferase family. SerC subfamily. Homodimer. Pyridoxal 5'-phosphate serves as cofactor.

It localises to the cytoplasm. It carries out the reaction O-phospho-L-serine + 2-oxoglutarate = 3-phosphooxypyruvate + L-glutamate. The catalysed reaction is 4-(phosphooxy)-L-threonine + 2-oxoglutarate = (R)-3-hydroxy-2-oxo-4-phosphooxybutanoate + L-glutamate. The protein operates within amino-acid biosynthesis; L-serine biosynthesis; L-serine from 3-phospho-D-glycerate: step 2/3. It functions in the pathway cofactor biosynthesis; pyridoxine 5'-phosphate biosynthesis; pyridoxine 5'-phosphate from D-erythrose 4-phosphate: step 3/5. Catalyzes the reversible conversion of 3-phosphohydroxypyruvate to phosphoserine and of 3-hydroxy-2-oxo-4-phosphonooxybutanoate to phosphohydroxythreonine. This is Phosphoserine aminotransferase from Klebsiella pneumoniae subsp. pneumoniae (strain ATCC 700721 / MGH 78578).